Reading from the N-terminus, the 333-residue chain is tRNA N6-adenosine threonylcarbamoyltransferase (333 aa).

The Fe cation site is built by His-111 and His-115. Substrate contacts are provided by residues 134–138 (LASGG), Asp-167, Gly-180, and Asn-273. Fe cation is bound at residue Asp-301.

This sequence belongs to the KAE1 / TsaD family. The cofactor is Fe(2+).

It is found in the cytoplasm. The enzyme catalyses L-threonylcarbamoyladenylate + adenosine(37) in tRNA = N(6)-L-threonylcarbamoyladenosine(37) in tRNA + AMP + H(+). Required for the formation of a threonylcarbamoyl group on adenosine at position 37 (t(6)A37) in tRNAs that read codons beginning with adenine. Is involved in the transfer of the threonylcarbamoyl moiety of threonylcarbamoyl-AMP (TC-AMP) to the N6 group of A37, together with TsaE and TsaB. TsaD likely plays a direct catalytic role in this reaction. The sequence is that of tRNA N6-adenosine threonylcarbamoyltransferase from Desulforapulum autotrophicum (strain ATCC 43914 / DSM 3382 / VKM B-1955 / HRM2) (Desulfobacterium autotrophicum).